Reading from the N-terminus, the 922-residue chain is MASAATTTHFPSSRIPSEPCASSGPLFPDDVLFTTEASSASSSSCHVENDSRPLSPTMFTDGRTPVNISAKHLKDHPLHEPTGTSEVLTFYPTMREFKNFSQYIKKIEQNGGHLKAGIAKIVAPEGWTPRPTRKDFSDVDDYEITQPARETIEATEKPGAYFKRNVTCRRKMPVREFRTLANSAQYRNPRPDLKGSEIEKHYFDNILHGEPIYGADTEGSFYDAQVEEWNMNRLGTILEDTNYEIKGVNTVYLYFGMYKTTFPWHAEDMDLYSINFLHFGAPKYWFAISSEHADRFERFMSQQFSYQNEYAPQCKAFLRHKTYLVTPELLRQAGIPYATMVQRPNEFIITFPRGYHMGFNLGYNLAESTNFASQRWIDYGKDAVLCDCNKDSVKIDMTHFMAKYRPDEYTTWWTYWYGGGRELWIPKKKKEVPKKRRQSLADASKIAKRARLGASSTATDSDGSSGSSGSEEATEGSSFMRALPAGYTVHNWQLRPDYDELLRKYKKETKLLRSDTRIDFYQEREFNHARRAEWPHCAVCQYFQPPHMNAINHTVPNSSRRLIPKWCFSKTDTKKHEDHHEPPPPLDRLLTCSNCHVTVHSHCCSGGGGGGGDDDDVTSSGEPWRCPRCRNRTDVEIRTTSCQLCELRGGALIPCQIGTDSTWAHVACALFNRRAIFDCPNRPGACFVEPSPRQQSETPRMPPRRLSEEYRAELGDLYENSRWECVVCHRTDEGLAPCVLCIEEQATTSLPTLAHVTCARRVGFVCEVRDYPRGVVMICHKHEHSYLVNKTTQQQAYTNVKVGDFVFVEDVVEPPQKLFTRGAIVRADKKETVVVDFLDNSCSRDNHVEDIISCECLFCENGDHQYGARVKVVWDDKQVYDAYFRGKGQMIEYTVRLEDGREVRHPRNRLKTKRELNAYLKK.

Positions 1–15 are enriched in polar residues; it reads MASAATTTHFPSSRI. 2 disordered regions span residues 1-21 and 42-61; these read MASA…EPCA and SSSC…MFTD. The 44-residue stretch at 87-130 folds into the JmjN domain; sequence VLTFYPTMREFKNFSQYIKKIEQNGGHLKAGIAKIVAPEGWTPR. Tyr213 contributes to the 2-oxoglutarate binding site. The 166-residue stretch at 223–388 folds into the JmjC domain; sequence DAQVEEWNMN…YGKDAVLCDC (166 aa). Fe cation is bound by residues His265 and Glu267. Residues Asn275 and Lys283 each coordinate 2-oxoglutarate. Cys314 and His320 together coordinate Zn(2+). Residue Lys321 participates in 2-oxoglutarate binding. His356 lines the Fe cation pocket. The Zn(2+) site is built by Cys386 and Cys388. The disordered stretch occupies residues 435 to 475; that stretch reads KRRQSLADASKIAKRARLGASSTATDSDGSSGSSGSEEATE. Residues 453-475 are compositionally biased toward low complexity; that stretch reads GASSTATDSDGSSGSSGSEEATE. The segment at 639-675 adopts a C2HC pre-PHD-type zinc-finger fold; it reads TTSCQLCELRGGALIPCQIGTDSTWAHVACALFNRRA. The PHD-type; degenerate zinc finger occupies 723–783; it reads WECVVCHRTD…GVVMICHKHE (61 aa).

Belongs to the JHDM3 histone demethylase family. Fe(2+) serves as cofactor.

It localises to the nucleus. It catalyses the reaction N(6),N(6),N(6)-trimethyl-L-lysyl(9)-[histone H3] + 2 2-oxoglutarate + 2 O2 = N(6)-methyl-L-lysyl(9)-[histone H3] + 2 formaldehyde + 2 succinate + 2 CO2. The enzyme catalyses N(6),N(6),N(6)-trimethyl-L-lysyl(36)-[histone H3] + 2 2-oxoglutarate + 2 O2 = N(6)-methyl-L-lysyl(36)-[histone H3] + 2 formaldehyde + 2 succinate + 2 CO2. Functionally, histone demethylase that specifically demethylates 'Lys-9' and 'Lys-36' residues of histone H3, thereby playing a central role in histone code. Demethylation of Lys residue generates formaldehyde and succinate. Involved in the negative regulation of lifespan in a germline-dependent fashion. This Caenorhabditis elegans protein is Lysine-specific demethylase 4 (jmjd-2).